Reading from the N-terminus, the 875-residue chain is Serine/threonine-protein kinase D2 (875 aa).

Positions 1 to 12 (MAAAPSHPAGLP) are enriched in low complexity. The tract at residues 1–35 (MAAAPSHPAGLPGSPGPGSPPPPGGLDLQSPPPLL) is disordered. The span at 14-35 (SPGPGSPPPPGGLDLQSPPPLL) shows a compositional bias: pro residues. Serine 30 carries the post-translational modification Phosphoserine. Residue tyrosine 87 is modified to Phosphotyrosine. Residues 138–188 (PHALTVHSYRAPAFCDHCGEMLFGLVRQGLKCDGCGLNYHKRCAFSIPNNC) form a Phorbol-ester/DAG-type 1 zinc finger. Phosphoserine occurs at positions 197, 198, 200, 203, 206, 211, 212, and 214. Residues 224–247 (RSTTDLLPRRPPSSSSSSSSSSFY) form a disordered region. Residues 236–245 (SSSSSSSSSS) show a composition bias toward low complexity. Position 244 is a phosphoserine; by CSNK1D and CSNK1E (serine 244). Serine 245 is subject to Phosphoserine. The segment at 265 to 315 (PHTFLIHSYTRPTVCQACKKLLKGLFRQGLQCKDCKFNCHKRCATRVPNDC) adopts a Phorbol-ester/DAG-type 2 zinc-finger fold. Residues 332–374 (DYSEADKSSISDELEDSGVIPGSHSESALHASEEEEGEGHKAQ) are disordered. The PH domain maps to 398-510 (TTLREGWVVH…WETAIRQALM (113 aa)). Tyrosine 408 is modified (phosphotyrosine). The residue at position 439 (tyrosine 439) is a Phosphotyrosine; by ABL1. Serine 519 carries the phosphoserine modification. Residues 552 to 808 (IFPDEVLGSG…VDKSLSHPWL (257 aa)) enclose the Protein kinase domain. Residues 558 to 566 (LGSGQFGVV) and lysine 581 each bind ATP. The active-site Proton acceptor is aspartate 675. Serine 707 is subject to Phosphoserine; by PKC. Serine 711 is subject to Phosphoserine; by autocatalysis. A Phosphotyrosine; by ABL1 modification is found at tyrosine 718. The Important for ABL1-mediated Tyr-718 phosphorylation signature appears at 725–727 (LNQ). Serine 873 is modified (phosphoserine; by autocatalysis).

Belongs to the protein kinase superfamily. CAMK Ser/Thr protein kinase family. PKD subfamily. In terms of assembly, interacts (via C-terminus) with LCK. Interacts (via N-terminus and zing-finger domain 1 and 2) with PRKCD in response to oxidative stress; the interaction is independent of PRKD2 tyrosine phosphorylation. The cofactor is Mg(2+). Phosphorylation of Ser-873 correlates with the activation status of the kinase. Ser-707 is probably phosphorylated by PKC. Phosphorylation at Ser-244 by CSNK1D and CSNK1E promotes nuclear localization and substrate targeting. Phosphorylation at Ser-244, Ser-707 and Ser-711 is required for nuclear localization. Phosphorylated at Tyr-438 by ABL1 in response to oxidative stress. Phosphorylated at Tyr-718 by ABL1 specifically in response to oxidative stress; requires prior phosphorylation at Ser-707 or/and Ser-711.

The protein resides in the cytoplasm. It localises to the cell membrane. Its subcellular location is the golgi apparatus. The protein localises to the trans-Golgi network. The catalysed reaction is L-seryl-[protein] + ATP = O-phospho-L-seryl-[protein] + ADP + H(+). It catalyses the reaction L-threonyl-[protein] + ATP = O-phospho-L-threonyl-[protein] + ADP + H(+). Activated by DAG and phorbol esters. Phorbol-ester/DAG-type domains bind DAG, mediating translocation to membranes. Autophosphorylation of Ser-711 and phosphorylation of Ser-707 by PKC relieves auto-inhibition by the PH domain. Catalytic activity is further increased by phosphorylation at Tyr-718 in response to oxidative stress. Its function is as follows. Serine/threonine-protein kinase that converts transient diacylglycerol (DAG) signals into prolonged physiological effects downstream of PKC, and is involved in the regulation of cell proliferation via MAPK1/3 (ERK1/2) signaling, oxidative stress-induced NF-kappa-B activation, inhibition of HDAC7 transcriptional repression, signaling downstream of T-cell antigen receptor (TCR) and cytokine production, and plays a role in Golgi membrane trafficking, angiogenesis, secretory granule release and cell adhesion. May potentiate mitogenesis induced by the neuropeptide bombesin by mediating an increase in the duration of MAPK1/3 (ERK1/2) signaling, which leads to accumulation of immediate-early gene products including FOS that stimulate cell cycle progression. In response to oxidative stress, is phosphorylated at Tyr-438 and Tyr-718 by ABL1, which leads to the activation of PRKD2 without increasing its catalytic activity, and mediates activation of NF-kappa-B. In response to the activation of the gastrin receptor CCKBR, is phosphorylated at Ser-244 by CSNK1D and CSNK1E, translocates to the nucleus, phosphorylates HDAC7, leading to nuclear export of HDAC7 and inhibition of HDAC7 transcriptional repression of NR4A1/NUR77. Upon TCR stimulation, is activated independently of ZAP70, translocates from the cytoplasm to the nucleus and is required for interleukin-2 (IL2) promoter up-regulation. During adaptive immune responses, is required in peripheral T-lymphocytes for the production of the effector cytokines IL2 and IFNG after TCR engagement and for optimal induction of antibody responses to antigens. In epithelial cells stimulated with lysophosphatidic acid (LPA), is activated through a PKC-dependent pathway and mediates LPA-stimulated interleukin-8 (IL8) secretion via a NF-kappa-B-dependent pathway. During TCR-induced T-cell activation, interacts with and is activated by the tyrosine kinase LCK, which results in the activation of the NFAT transcription factors. In the trans-Golgi network (TGN), regulates the fission of transport vesicles that are on their way to the plasma membrane and in polarized cells is involved in the transport of proteins from the TGN to the basolateral membrane. Plays an important role in endothelial cell proliferation and migration prior to angiogenesis, partly through modulation of the expression of KDR/VEGFR2 and FGFR1, two key growth factor receptors involved in angiogenesis. In secretory pathway, is required for the release of chromogranin-A (CHGA)-containing secretory granules from the TGN. Downstream of PRKCA, plays important roles in angiotensin-2-induced monocyte adhesion to endothelial cells. In Mus musculus (Mouse), this protein is Serine/threonine-protein kinase D2 (Prkd2).